The following is a 459-amino-acid chain: Trigger factor (459 aa).

The region spanning 166–245 is the PPIase FKBP-type domain; that stretch reads GDFANIDLTA…VNSVKAEELP (80 aa).

The protein belongs to the FKBP-type PPIase family. Tig subfamily.

Its subcellular location is the cytoplasm. It catalyses the reaction [protein]-peptidylproline (omega=180) = [protein]-peptidylproline (omega=0). Its function is as follows. Involved in protein export. Acts as a chaperone by maintaining the newly synthesized protein in an open conformation. Functions as a peptidyl-prolyl cis-trans isomerase. In Bifidobacterium longum (strain NCC 2705), this protein is Trigger factor.